We begin with the raw amino-acid sequence, 498 residues long: ATP synthase subunit beta, chloroplastic (498 aa).

Residue 172 to 179 coordinates ATP; the sequence is GGAGVGKT.

It belongs to the ATPase alpha/beta chains family. In terms of assembly, F-type ATPases have 2 components, CF(1) - the catalytic core - and CF(0) - the membrane proton channel. CF(1) has five subunits: alpha(3), beta(3), gamma(1), delta(1), epsilon(1). CF(0) has four main subunits: a(1), b(1), b'(1) and c(9-12).

It is found in the plastid. Its subcellular location is the chloroplast thylakoid membrane. It carries out the reaction ATP + H2O + 4 H(+)(in) = ADP + phosphate + 5 H(+)(out). Produces ATP from ADP in the presence of a proton gradient across the membrane. The catalytic sites are hosted primarily by the beta subunits. This is ATP synthase subunit beta, chloroplastic from Nymphaea odorata (White water lily).